Reading from the N-terminus, the 253-residue chain is Glucosamine-6-phosphate deaminase (253 aa).

D67 acts as the Proton acceptor; for enolization step in catalysis. N136 (for ring-opening step) is an active-site residue. Residue H138 is the Proton acceptor; for ring-opening step of the active site. E143 acts as the For ring-opening step in catalysis.

Belongs to the glucosamine/galactosamine-6-phosphate isomerase family. NagB subfamily.

It catalyses the reaction alpha-D-glucosamine 6-phosphate + H2O = beta-D-fructose 6-phosphate + NH4(+). The protein operates within amino-sugar metabolism; N-acetylneuraminate degradation; D-fructose 6-phosphate from N-acetylneuraminate: step 5/5. Its function is as follows. Catalyzes the reversible isomerization-deamination of glucosamine 6-phosphate (GlcN6P) to form fructose 6-phosphate (Fru6P) and ammonium ion. The chain is Glucosamine-6-phosphate deaminase from Thermoanaerobacter sp. (strain X514).